Reading from the N-terminus, the 370-residue chain is Putative transposase InsL for insertion sequence element IS186A (370 aa).

It belongs to the transposase 11 family.

In terms of biological role, involved in the transposition of the insertion sequence IS186. The protein is Putative transposase InsL for insertion sequence element IS186A (insL1) of Escherichia coli (strain K12).